The chain runs to 568 residues: Sulfate adenylyltransferase (568 aa).

Residues 1-162 form an N-terminal region; the sequence is MANSPHGGVL…IEAVNKLNHY (162 aa). A catalytic region spans residues 163 to 388; that stretch reads DYVALRYSPA…LRESSPPRAT (226 aa). Residue Gln190 participates in sulfate binding. Residues 190-193 and 284-287 contribute to the ATP site; these read QTRN and GRDH. Residues Thr191, Arg192, and Asn193 contribute to the active site. Arg192 is a binding site for sulfate. Sulfate is bound at residue Ala288. Position 326 (Val326) interacts with ATP. The tract at residues 389-568 is allosteric regulation domain; adenylyl-sulfate kinase-like; it reads QGFTIFLTGY…LESEGYFDRL (180 aa). 3'-phosphoadenylyl sulfate-binding positions include 428–431, Arg445, 471–472, and Arg510; these read DTVR and IA.

The protein in the N-terminal section; belongs to the sulfate adenylyltransferase family. It in the C-terminal section; belongs to the APS kinase family. As to quaternary structure, homohexamer. Dimer of trimers.

It is found in the cytoplasm. The catalysed reaction is sulfate + ATP + H(+) = adenosine 5'-phosphosulfate + diphosphate. Its pathway is sulfur metabolism; hydrogen sulfide biosynthesis; sulfite from sulfate: step 1/3. Allosterically inhibited by 3'-phosphoadenosine 5'-phosphosulfate (PAPS). In terms of biological role, catalyzes the first intracellular reaction of sulfate assimilation, forming adenosine-5'-phosphosulfate (APS) from inorganic sulfate and ATP. Plays an important role in sulfate activation as a component of the biosynthesis pathway of sulfur-containing amino acids. The polypeptide is Sulfate adenylyltransferase (Aspergillus terreus).